A 1140-amino-acid polypeptide reads, in one-letter code: MSYNYVVTAQKPTAVNGCVTGHFTSAEDLNLLIAKNTRLEIYVVTAEGLRPVKEVGMYGKTAVMELFRPKGESKDLLFILTAKYNACILEYKQNGDNIDIITRAHGNVQDRIGRPSETGIIGIIDPECRMIGLRLYDGLFKVIPLDRENKELKAFNIRLEELQVIDVKFLYGCQAPTICFVYQDPQGRHVKTYEVSLREKEFNKGPWKQENVEAEASMVIAVPEPFGGAIIIGQESITYHNGDKYLAIAPPIIKQSTIVCHNRVDPNGSRYLLGDMEGRLFMLLLEKEEQMDGTVTLKDLRVELLGETSIAECLTYLDNGVVFVGSRLGDSQLVKLNVDSNEQGSYVVAMETFTNLGPIVDMCVVDLERQGQGQLVTCSGAFKEGSLRIIRNGIGIHEHASIDLPGIKGLWPLRSDSHREMDNMLVLSFVGQTRVLMLNGEEVEETELTGFVDDQQTFFCGNVAHQQLIQITSASVRLVSQEPKALVSEWKEPNGKNISVASCNSNQVVVAVGRALYYLEIRPQELRQINCTEMEHEVACLDITPLGDTNGMSPLCAIGLWTDISARILKLPSFELLHKEMLGGEIIPRSILMTTFESSHYLLCALGDGALFYFGLSLETGLLSDRKKVTLGTQPTVLRTFRSLSTTNVFACSDRPTVIYSSNHKLVFSNVNLKEVNYMCPLNSDGYPDSLALANNSTLTIGTIDEIQKLHIRTVPLYESPRKICYQEVSQCFGVLSSRIEVQDASGGTTALRPSASTQALSSSVSTSKLFSSSTAPHETSFGEEVEVHNLLIIDQHTFEVLHAHQFLQNEYALSLVSCKLGKDPNTYFIVGTAMVYPEEAEPKQGRIVVFHYSDGKLQSLAEKEVKGAVYSMVEFNGKLLASINSTVRLYEWTAEKELRTECNHYNNIMALYLKTKGDFILVGDLMRSVLLLAYKPMEGNFEEIARDFNPNWMSAVEILDDDNFLGAENAFNLFVCQKDSAATTDEERQHLQEVGLSHLGEFVNVFCHGSLVMQNLGETSTPTQGSVLFGTVNGMIGLVTSLSESWYNLLLDMQNRLNKVIKSVGKIEHSFWRSFHTERKTEPATGFIDGDLIESFLDISRPKMQEVVANLQIDDGSGMKREATVDDLIKIVEELTRIH.

Residues 13 to 356 form a WD repeat beta-propeller A region; it reads TAVNGCVTGH…VVAMETFTNL (344 aa). The interval 391-708 is WD repeat beta-propeller B; Interaction with CUL4A; the sequence is RNGIGIHEHA…LTIGTIDEIQ (318 aa). The interval 709–1043 is WD repeat beta-propeller C; that stretch reads KLHIRTVPLY…NGMIGLVTSL (335 aa).

Belongs to the DDB1 family. Component of the UV-DDB complex which includes DDB1 and DDB2. Component of numerous DCX (DDB1-CUL4-X-box) E3 ubiquitin-protein ligase complexes which consist of a core of DDB1, CUL4A or CUL4B and RBX1, and a substrate receptor, such as CRBN. DDB1 may recruit specific substrate targeting subunits to the DCX complex. These substrate targeting subunits are generally known as DCAF (DDB1- and CUL4-associated factor) or CDW (CUL4-DDB1-associated WD40-repeat) proteins.

It localises to the cytoplasm. Its subcellular location is the nucleus. It participates in protein modification; protein ubiquitination. Its function is as follows. Protein, which is both involved in DNA repair and protein ubiquitination, as part of the UV-DDB complex and DCX (DDB1-CUL4-X-box) complexes, respectively. Core component of the UV-DDB complex (UV-damaged DNA-binding protein complex), a complex that recognizes UV-induced DNA damage and recruit proteins of the nucleotide excision repair pathway (the NER pathway) to initiate DNA repair. The UV-DDB complex may recognize UV-induced DNA damage and recruit proteins of the nucleotide excision repair pathway (the NER pathway) to initiate DNA repair. Also functions as a component of numerous distinct DCX (DDB1-CUL4-X-box) E3 ubiquitin-protein ligase complexes which mediate the ubiquitination and subsequent proteasomal degradation of target proteins. The functional specificity of the DCX E3 ubiquitin-protein ligase complex is determined by the variable substrate recognition component recruited by DDB1. May play a role in the regulation of the circadian clock. In Gallus gallus (Chicken), this protein is DNA damage-binding protein 1 (DDB1).